Here is a 324-residue protein sequence, read N- to C-terminus: Homoserine kinase (324 aa).

Residue 87-97 (PVARGMGSSAA) participates in ATP binding.

It belongs to the GHMP kinase family. Homoserine kinase subfamily.

It is found in the cytoplasm. It catalyses the reaction L-homoserine + ATP = O-phospho-L-homoserine + ADP + H(+). The protein operates within amino-acid biosynthesis; L-threonine biosynthesis; L-threonine from L-aspartate: step 4/5. In terms of biological role, catalyzes the ATP-dependent phosphorylation of L-homoserine to L-homoserine phosphate. This Symbiobacterium thermophilum (strain DSM 24528 / JCM 14929 / IAM 14863 / T) protein is Homoserine kinase.